The chain runs to 216 residues: LexA repressor (216 aa).

A DNA-binding region (H-T-H motif) is located at residues 28–48 (RAEIAAELGFSSANSAEEHLR). Active-site for autocatalytic cleavage activity residues include Ser-134 and Lys-171.

Belongs to the peptidase S24 family. In terms of assembly, homodimer.

It catalyses the reaction Hydrolysis of Ala-|-Gly bond in repressor LexA.. Represses a number of genes involved in the response to DNA damage (SOS response), including recA and lexA. In the presence of single-stranded DNA, RecA interacts with LexA causing an autocatalytic cleavage which disrupts the DNA-binding part of LexA, leading to derepression of the SOS regulon and eventually DNA repair. The chain is LexA repressor from Paraburkholderia xenovorans (strain LB400).